We begin with the raw amino-acid sequence, 605 residues long: Protein ZRG17 (605 aa).

Over 1 to 225 (METPQMNAIQ…DLLSNLPWPK (225 aa)) the chain is Cytoplasmic. Phosphoserine is present on residues S16 and S131. Residues 118–178 (PAPKLVPPPP…PSSAASRTSF (61 aa)) are disordered. Residues 143-176 (SKRSSMTLDSPFNFTTSTLQPHQQTPPSSAASRT) show a composition bias toward polar residues. Residues 226–246 (AYIQLSIAALQIFACLITFQV) form a helical membrane-spanning segment. Over 247–254 (GHLYSWSN) the chain is Lumenal. The chain crosses the membrane as a helical span at residues 255–275 (FITLSHFITYDIIGSLVIIFV). Residues 276–287 (ENLSQFQVWFTG) lie on the Cytoplasmic side of the membrane. Residues 288 to 308 (TITFPFGLNRIDVLLSFALAV) traverse the membrane as a helical segment. Residue S309 is a topological domain, lumenal. Residues 310–330 (LCFVGLDLLFHIIEEFIVLFV) form a helical membrane-spanning segment. The Cytoplasmic segment spans residues 331–363 (ESGSSLTNNHDHDEINEQIPHSHIANANDSQNE). A helical transmembrane segment spans residues 364 to 384 (NITLWYSILMINLVLSTLSLY). Residues 385–399 (KTFYANKYSNLKTKN) are Lumenal-facing. A helical transmembrane segment spans residues 400-420 (PIITITYTAYLFIYPLLLDLL). Residues 421–422 (SS) lie on the Cytoplasmic side of the membrane. The chain crosses the membrane as a helical span at residues 423–443 (ISDYLATLVISSLILWHGLTI). Residues 444 to 545 (ARWTSTVLLM…ERLSEFKSRY (102 aa)) lie on the Lumenal side of the membrane. Residues 473–482 (DTTAHTQQVE) show a composition bias toward polar residues. The interval 473–497 (DTTAHTQQVESKAAKEKPSVRPRSM) is disordered. S498 is modified (phosphoserine). Residues 546-566 (ILNYDDIVISKVNFTLYVVLI) traverse the membrane as a helical segment. At 567 to 605 (KITMKGGSDDDELMLRLAIDKCIQTSIPTCETTIDIDRI) the chain is on the cytoplasmic side.

The protein resides in the endoplasmic reticulum membrane. The chain is Protein ZRG17 (ZRG17) from Saccharomyces cerevisiae (strain ATCC 204508 / S288c) (Baker's yeast).